Here is a 198-residue protein sequence, read N- to C-terminus: MHILIISISYFLGSLPTGFLFGKFLKNIDLRLTGSGSTGATNVLRNVGKWPAFFVFIIDVGKGLIAVKIAQHYTNQNLFEVLAGIAAISGHIWPIWLKGKGGKAVATGLGMFIALSWKIGFASLGIFLIILAKSKIVSLSSISAAIFLPFLMFLDIGSTNHPYFFISLVVSILVIWKHRTNIRRLLKGEELKINDINK.

The next 6 helical transmembrane spans lie at 1 to 21 (MHILIISISYFLGSLPTGFLF), 50 to 70 (WPAFFVFIIDVGKGLIAVKIA), 77 to 97 (NLFEVLAGIAAISGHIWPIWL), 111 to 131 (MFIALSWKIGFASLGIFLIIL), 136 to 156 (IVSLSSISAAIFLPFLMFLDI), and 157 to 177 (GSTNHPYFFISLVVSILVIWK).

This sequence belongs to the PlsY family. In terms of assembly, probably interacts with PlsX.

The protein localises to the cell inner membrane. It carries out the reaction an acyl phosphate + sn-glycerol 3-phosphate = a 1-acyl-sn-glycero-3-phosphate + phosphate. It participates in lipid metabolism; phospholipid metabolism. Functionally, catalyzes the transfer of an acyl group from acyl-phosphate (acyl-PO(4)) to glycerol-3-phosphate (G3P) to form lysophosphatidic acid (LPA). This enzyme utilizes acyl-phosphate as fatty acyl donor, but not acyl-CoA or acyl-ACP. This chain is Glycerol-3-phosphate acyltransferase, found in Prochlorococcus marinus subsp. pastoris (strain CCMP1986 / NIES-2087 / MED4).